Reading from the N-terminus, the 289-residue chain is 4-diphosphocytidyl-2-C-methyl-D-erythritol kinase (289 aa).

Lys-10 is an active-site residue. 94–104 (PVAAGLAGGSS) contributes to the ATP binding site. Residue Asp-136 is part of the active site.

The protein belongs to the GHMP kinase family. IspE subfamily.

It carries out the reaction 4-CDP-2-C-methyl-D-erythritol + ATP = 4-CDP-2-C-methyl-D-erythritol 2-phosphate + ADP + H(+). The protein operates within isoprenoid biosynthesis; isopentenyl diphosphate biosynthesis via DXP pathway; isopentenyl diphosphate from 1-deoxy-D-xylulose 5-phosphate: step 3/6. In terms of biological role, catalyzes the phosphorylation of the position 2 hydroxy group of 4-diphosphocytidyl-2C-methyl-D-erythritol. This chain is 4-diphosphocytidyl-2-C-methyl-D-erythritol kinase, found in Bacillus velezensis (strain DSM 23117 / BGSC 10A6 / LMG 26770 / FZB42) (Bacillus amyloliquefaciens subsp. plantarum).